Here is a 145-residue protein sequence, read N- to C-terminus: Basic phospholipase A2 BFPA (145 aa).

An N-terminal signal peptide occupies residues 1–27; sequence MNPAHLLVLLAVCVSLLGAANIPPQSL. 7 cysteine pairs are disulfide-bonded: cysteine 38–cysteine 97, cysteine 52–cysteine 144, cysteine 54–cysteine 70, cysteine 69–cysteine 125, cysteine 76–cysteine 118, cysteine 86–cysteine 111, and cysteine 104–cysteine 116. Positions 53, 55, and 57 each coordinate Ca(2+). Histidine 73 is an active-site residue. Aspartate 74 contributes to the Ca(2+) binding site. Residue aspartate 119 is part of the active site.

This sequence belongs to the phospholipase A2 family. Group I subfamily. D49 sub-subfamily. As to quaternary structure, homodimer; disulfide-linked. Requires Ca(2+) as cofactor. In terms of tissue distribution, expressed by the venom gland.

The protein localises to the secreted. The catalysed reaction is a 1,2-diacyl-sn-glycero-3-phosphocholine + H2O = a 1-acyl-sn-glycero-3-phosphocholine + a fatty acid + H(+). Functionally, snake venom phospholipase A2 (PLA2) that inhibits blood coagulation and shows bactericidal activities against both Gram-negative and -positive bacteria (E.coli, MIC=0.4 uM and S.aureus, MIC=0.1 uM). PLA2 catalyzes the calcium-dependent hydrolysis of the 2-acyl groups in 3-sn-phosphoglycerides. The protein is Basic phospholipase A2 BFPA of Bungarus fasciatus (Banded krait).